The following is a 154-amino-acid chain: Protein Smg homolog (154 aa).

The protein belongs to the Smg family.

The polypeptide is Protein Smg homolog (Aromatoleum aromaticum (strain DSM 19018 / LMG 30748 / EbN1) (Azoarcus sp. (strain EbN1))).